Consider the following 199-residue polypeptide: Early activation antigen CD69 (199 aa).

Over residues 1-14 (MDSENCSITENSSS) the composition is skewed to polar residues. The interval 1-20 (MDSENCSITENSSSHLERGQ) is disordered. At 1–40 (MDSENCSITENSSSHLERGQKDHGTSIHFEKHHEGSIQVS) the chain is on the cytoplasmic side. A helical; Signal-anchor for type II membrane protein transmembrane segment spans residues 41–61 (IPWAVLIVVLITSLIIALIAL). The Extracellular segment spans residues 62–199 (NVGKYNCPGL…FHWVCSKPSR (138 aa)). Disulfide bonds link Cys85/Cys96, Cys113/Cys194, and Cys173/Cys186. The C-type lectin domain occupies 92-195 (YKRTCYFFST…CEANFHWVCS (104 aa)). Residues Asn150, Asn166, and Asn180 are each glycosylated (N-linked (GlcNAc...) asparagine).

In terms of assembly, homodimer; disulfide-linked. Interacts with S100A8 and S100A9. Interacts with galactin-1/LGALS1. Interacts with S1PR1; this interaction mediates S1PR1 degradation. Interacts with JAK3 and STAT5. Constitutive Ser/Thr phosphorylation in both mature thymocytes and activated T-lymphocytes. As to expression, expressed on the surface of activated T-cells, B-cells, natural killer cells, neutrophils and platelets. Present also in eosinophils.

The protein resides in the cell membrane. Transmembrane protein expressed mainly on T-cells resident in mucosa that plays an essential role in immune cell homeostasis. Rapidly expressed on the surface of platelets, T-lymphocytes and NK cells upon activation by various stimuli, such as antigen recognition or cytokine signaling, stimulates different signaling pathways in different cell types. Negatively regulates Th17 cell differentiation through its carbohydrate dependent interaction with galectin-1/LGALS1 present on immature dendritic cells. Association of CD69 cytoplasmic tail with the JAK3/STAT5 signaling pathway regulates the transcription of RORgamma/RORC and, consequently, differentiation toward the Th17 lineage. Also acts via the S100A8/S100A9 complex present on peripheral blood mononuclear cells to promote the conversion of naive CD4 T-cells into regulatory T-cells. Acts as an oxidized low-density lipoprotein (oxLDL) receptor in CD4 T-lymphocytes and negatively regulates the inflammatory response by inducing the expression of PDCD1 through the activation of NFAT. Participates in adipose tissue-derived mesenchymal stem cells (ASCs)-mediated protection against P.aeruginosa infection. Mechanistically, specifically recognizes P.aeruginosa to promote ERK1 activation, followed by granulocyte-macrophage colony-stimulating factor (GM-CSF) and other inflammatory cytokines secretion. In eosinophils, induces IL-10 production through the ERK1/2 pathway. Negatively regulates the chemotactic responses of effector lymphocytes and dendritic cells (DCs) to sphingosine 1 phosphate/S1P by acting as a S1PR1 receptor agonist and facilitating the internalization and degradation of the receptor. The protein is Early activation antigen CD69 (Cd69) of Mus musculus (Mouse).